Here is a 147-residue protein sequence, read N- to C-terminus: 3-dehydroquinate dehydratase (147 aa).

The active-site Proton acceptor is Y23. Positions 75, 81, and 88 each coordinate substrate. The active-site Proton donor is H101. Substrate is bound by residues 102–103 and R112; that span reads LS.

Belongs to the type-II 3-dehydroquinase family. Homododecamer.

The catalysed reaction is 3-dehydroquinate = 3-dehydroshikimate + H2O. It participates in metabolic intermediate biosynthesis; chorismate biosynthesis; chorismate from D-erythrose 4-phosphate and phosphoenolpyruvate: step 3/7. In terms of biological role, catalyzes a trans-dehydration via an enolate intermediate. In Nitrosococcus oceani (strain ATCC 19707 / BCRC 17464 / JCM 30415 / NCIMB 11848 / C-107), this protein is 3-dehydroquinate dehydratase.